The primary structure comprises 195 residues: Heat shock protein beta-8 (195 aa).

A Phosphoserine modification is found at S56. At T62 the chain carries Phosphothreonine. Asymmetric dimethylarginine is present on residues R70 and R77. In terms of domain architecture, sHSP spans 73–184 (TATARFGVPA…TFGESSFNNE (112 aa)). A disordered region spans residues 175-195 (TFGESSFNNELPQDSQEVTCT). The span at 176–195 (FGESSFNNELPQDSQEVTCT) shows a compositional bias: polar residues.

It belongs to the small heat shock protein (HSP20) family. In terms of assembly, monomer. Forms a ternary complex with BAG3 and HSPA1A. Component of the chaperone-assisted selective autophagy (CASA) complex consisting of BAG3, HSPA8/HSC70, HSPB8 and STUB1/CHIP. Interacts with HSPB1. Interacts with DNAJB6. Interacts with BAG3. Post-translationally, phosphorylated.

It is found in the cytoplasm. It localises to the nucleus. Its function is as follows. Involved in the chaperone-assisted selective autophagy (CASA), a crucial process for protein quality control, particularly in mechanical strained cells and tissues such as muscle. Displays temperature-dependent chaperone activity. The polypeptide is Heat shock protein beta-8 (HSPB8) (Macaca mulatta (Rhesus macaque)).